A 724-amino-acid chain; its full sequence is Protein Aster-A (724 aa).

The segment covering 1–18 (MFDTTPHSGRSTPSSSPS) has biased composition (low complexity). The segment at 1 to 66 (MFDTTPHSGR…TPSTQSLGSR (66 aa)) is disordered. Over residues 57 to 66 (TPSTQSLGSR) the composition is skewed to polar residues. Residues 91–158 (EDFRKLFSKL…KEVTCLKKEK (68 aa)) form the GRAM domain. The disordered stretch occupies residues 256–336 (SSGAADRSQE…GPTTLGPLDL (81 aa)). Residues S263, S267, and S271 each carry the phosphoserine modification. Positions 300-312 (DSQPDASSSQTVT) are enriched in polar residues. Residues 326–336 (DGPTTLGPLDL) show a composition bias toward low complexity. The region spanning 367-538 (SGRLLINSVF…ELAKAEKLSL (172 aa)) is the VASt domain. S415 carries the post-translational modification Phosphoserine. The segment at 560-579 (SWRAHGDGPQHPDPDPCARA) is disordered. A compositionally biased stretch (basic and acidic residues) spans 563–575 (AHGDGPQHPDPDP). Residues 610–630 (LISIVICVSLIILIALNVLLF) form a helical membrane-spanning segment.

Expressed in liver.

Its subcellular location is the endoplasmic reticulum membrane. The protein localises to the cell membrane. The protein resides in the cytoplasmic vesicle. It localises to the autophagosome. Its function is as follows. Cholesterol transporter that mediates non-vesicular transport of cholesterol from the plasma membrane (PM) to the endoplasmic reticulum (ER). Contains unique domains for binding cholesterol and the PM, thereby serving as a molecular bridge for the transfer of cholesterol from the PM to the ER. Plays a crucial role in cholesterol homeostasis and has the unique ability to localize to the PM based on the level of membrane cholesterol. In lipid-poor conditions localizes to the ER membrane and in response to excess cholesterol in the PM is recruited to the endoplasmic reticulum-plasma membrane contact sites (EPCS) which is mediated by the GRAM domain. At the EPCS, the sterol-binding VASt/ASTER domain binds to the cholesterol in the PM and facilitates its transfer from the PM to ER. May play a role in tumor progression. Plays a role in autophagy regulation and is required for biogenesis of the autophagosome. This function in autophagy requires its cholesterol-transfer activity. This chain is Protein Aster-A, found in Homo sapiens (Human).